Here is a 127-residue protein sequence, read N- to C-terminus: Glycine cleavage system H protein (127 aa).

Residues 22 to 104 form the Lipoyl-binding domain; sequence EAVIGITQFA…YTDGWMVRVK (83 aa). K63 is subject to N6-lipoyllysine.

Belongs to the GcvH family. In terms of assembly, the glycine cleavage system is composed of four proteins: P, T, L and H. It depends on (R)-lipoate as a cofactor.

Its function is as follows. The glycine cleavage system catalyzes the degradation of glycine. The H protein shuttles the methylamine group of glycine from the P protein to the T protein. In Nitratidesulfovibrio vulgaris (strain DSM 19637 / Miyazaki F) (Desulfovibrio vulgaris), this protein is Glycine cleavage system H protein.